The following is a 133-amino-acid chain: Triatox (133 aa).

The N-terminal stretch at 1-22 (MTTLRVLLAVCCAAYCILAEDV) is a signal peptide. The 103-residue stretch at 23 to 125 (TVPANGELKL…RAMCTVYSAE (103 aa)) folds into the CUB domain. A disulfide bond links cysteine 70 and cysteine 86.

The protein belongs to the venom CUB family. In terms of tissue distribution, expressed by the venom gland.

Its subcellular location is the secreted. May function as an antimicrobial peptide and may be related to the innate defense of the insect in the salivary glands. The protein is Triatox of Triatoma infestans (Assassin bug).